Consider the following 249-residue polypeptide: 5'-nucleotidase SurE (249 aa).

The a divalent metal cation site is built by Asp8, Asp9, Ser39, and Asn91.

This sequence belongs to the SurE nucleotidase family. Requires a divalent metal cation as cofactor.

It is found in the cytoplasm. It carries out the reaction a ribonucleoside 5'-phosphate + H2O = a ribonucleoside + phosphate. Its function is as follows. Nucleotidase that shows phosphatase activity on nucleoside 5'-monophosphates. This Pseudomonas savastanoi pv. phaseolicola (strain 1448A / Race 6) (Pseudomonas syringae pv. phaseolicola (strain 1448A / Race 6)) protein is 5'-nucleotidase SurE.